We begin with the raw amino-acid sequence, 593 residues long: Meiosis-specific APC/C activator protein AMA1 (593 aa).

Over residues Met1–Asn11 the composition is skewed to basic residues. The interval Met1 to Thr26 is disordered. Residues Ser12–Ser25 show a composition bias toward low complexity. Residues Asp29–Ser35 carry the C-box motif. Over residues Ser94 to Ser109 the composition is skewed to low complexity. A disordered region spans residues Ser94–Lys125. Residues Ser113–Lys125 show a composition bias toward basic and acidic residues. WD repeat units follow at residues Arg226 to Leu264, Glu271 to Asn310, Glu323 to Lys364, Ala388 to Lys427, Pro432 to Glu474, and Pro525 to Ile564.

Belongs to the WD repeat CDC20/Fizzy family. Interacts with CDC16.

In terms of biological role, activator protein that regulates the ubiquitin ligase activity and substrate specificity of the anaphase promoting complex/cyclosome (APC/C). Required for the ubiquitination and subsequent degradation of the B-type cyclin CLB1 by the APC/C complex during meiosis. Required for meiosis I, late meiotic gene expression and spore wall assembly. This is Meiosis-specific APC/C activator protein AMA1 (AMA1) from Saccharomyces cerevisiae (strain ATCC 204508 / S288c) (Baker's yeast).